The primary structure comprises 288 residues: Pyridoxal kinase PdxY (288 aa).

Substrate contacts are provided by residues Ser12 and 47–48 (TQ). ATP contacts are provided by residues Asp114, Glu151, Lys184, and 211–214 (RPLL). Asp225 is a binding site for substrate.

It belongs to the pyridoxine kinase family. PdxY subfamily. In terms of assembly, homodimer. Requires Mg(2+) as cofactor.

It carries out the reaction pyridoxal + ATP = pyridoxal 5'-phosphate + ADP + H(+). The protein operates within cofactor metabolism; pyridoxal 5'-phosphate salvage; pyridoxal 5'-phosphate from pyridoxal: step 1/1. Its function is as follows. Pyridoxal kinase involved in the salvage pathway of pyridoxal 5'-phosphate (PLP). Catalyzes the phosphorylation of pyridoxal to PLP. In Pseudomonas savastanoi pv. phaseolicola (strain 1448A / Race 6) (Pseudomonas syringae pv. phaseolicola (strain 1448A / Race 6)), this protein is Pyridoxal kinase PdxY.